We begin with the raw amino-acid sequence, 603 residues long: UvrABC system protein C (603 aa).

Residues Asp15–Ile92 form the GIY-YIG domain. The 36-residue stretch at Ala197–Thr232 folds into the UVR domain.

The protein belongs to the UvrC family. In terms of assembly, interacts with UvrB in an incision complex.

Its subcellular location is the cytoplasm. Its function is as follows. The UvrABC repair system catalyzes the recognition and processing of DNA lesions. UvrC both incises the 5' and 3' sides of the lesion. The N-terminal half is responsible for the 3' incision and the C-terminal half is responsible for the 5' incision. This chain is UvrABC system protein C, found in Limosilactobacillus fermentum (strain NBRC 3956 / LMG 18251) (Lactobacillus fermentum).